Here is a 184-residue protein sequence, read N- to C-terminus: Photosystem I assembly protein Ycf4 (184 aa).

Helical transmembrane passes span 22–42 (FCWA…GISS) and 57–77 (IIFF…LFIS).

The protein belongs to the Ycf4 family.

It localises to the plastid. It is found in the chloroplast thylakoid membrane. In terms of biological role, seems to be required for the assembly of the photosystem I complex. This is Photosystem I assembly protein Ycf4 from Populus alba (White poplar).